Reading from the N-terminus, the 1878-residue chain is DNA polymerase (1878 aa).

Disordered stretches follow at residues 691-727 and 1839-1878; these read LFQADDDDDDDDEDEDDGLLDERQQDSAEDMKKKGPN and TQDDVVKKKRAPKRAAIDRKSGSGGKKSKITAGKTAGTMF. Over residues 694–709 the composition is skewed to acidic residues; the sequence is ADDDDDDDDEDEDDGL. Over residues 710 to 723 the composition is skewed to basic and acidic residues; that stretch reads LDERQQDSAEDMKK. Over residues 1868-1878 the composition is skewed to low complexity; the sequence is ITAGKTAGTMF.

Belongs to the DNA polymerase type-B family.

It catalyses the reaction DNA(n) + a 2'-deoxyribonucleoside 5'-triphosphate = DNA(n+1) + diphosphate. The chain is DNA polymerase from Magallana gigas (Pacific oyster).